A 352-amino-acid polypeptide reads, in one-letter code: MKKKREKLVLKSEIIAQMPKVELHCHLDGSLSLSVIKELAKNAGIHMTMSDEEILEKAQAPENTKNLLEYLQRFDFVLPLLQTYKNLELAAYDVVRQAANDNIKYIEIRFAPSQHLLENLTLEEAVEAVIAGLSRAENDFDIRANALVCGLKQEPIQKLQKLLPLFDKIPDEHLVGFDMAGDELNYPQEKFVDLIHDIKIKGVNVTLHAGECPACEKNILDSIAMGASRIGHGIMTKNLSEAEQKMMIEKQIVLEMAPTSNFQTKAVTELAQYPFKELYDKGIHVTLNTDNRMVSATNLSKEYEKISAWYPDFSLSDFEKINHYAIDGAFIGQEEKEELHQRFTKEYKKISE.

Residues histidine 24 and histidine 26 each coordinate Zn(2+). Histidine 26, aspartate 28, and glycine 181 together coordinate substrate. Histidine 208 is a binding site for Zn(2+). Catalysis depends on glutamate 211, which acts as the Proton donor. Aspartate 290 is a binding site for Zn(2+).

This sequence belongs to the metallo-dependent hydrolases superfamily. Adenosine and AMP deaminases family. Adenosine deaminase subfamily. Zn(2+) is required as a cofactor.

It catalyses the reaction adenosine + H2O + H(+) = inosine + NH4(+). The catalysed reaction is 2'-deoxyadenosine + H2O + H(+) = 2'-deoxyinosine + NH4(+). Its function is as follows. Catalyzes the hydrolytic deamination of adenosine and 2-deoxyadenosine. In Lactococcus lactis subsp. lactis (strain IL1403) (Streptococcus lactis), this protein is Adenosine deaminase.